The primary structure comprises 133 residues: Phosphomevalonate dehydratase small subunit (133 aa).

The active-site Proton acceptor is the Ser-62.

It belongs to the AcnX type II small subunit family. As to quaternary structure, heterodimer composed of a large subunit (PMDh-L) and a small subunit (PMDh-S).

It carries out the reaction (R)-5-phosphomevalonate = (2E)-3-methyl-5-phosphooxypent-2-enoate + H2O. It functions in the pathway isoprenoid biosynthesis; isopentenyl diphosphate biosynthesis via mevalonate pathway. Functionally, component of a hydro-lyase that catalyzes the dehydration of mevalonate 5-phosphate (MVA5P) to form trans-anhydromevalonate 5-phosphate (tAHMP). Involved in the archaeal mevalonate (MVA) pathway, which provides fundamental precursors for isoprenoid biosynthesis, such as isopentenyl diphosphate (IPP) and dimethylallyl diphosphate (DMAPP). The protein is Phosphomevalonate dehydratase small subunit of Thermococcus kodakarensis (strain ATCC BAA-918 / JCM 12380 / KOD1) (Pyrococcus kodakaraensis (strain KOD1)).